The sequence spans 1420 residues: tRNA (32-2'-O)-methyltransferase regulator TRM732 (1420 aa).

The required for activity stretch occupies residues 748-754; it reads RRSGGLP.

This sequence belongs to the THADA family. As to quaternary structure, interacts with TRM7; for 2'-O-methylation of position 32 in substrate tRNAs.

The protein resides in the cytoplasm. In terms of biological role, together with methyltransferase TRM7, methylates the 2'-O-ribose of nucleotides at position 32 of the anticodon loop of substrate tRNAs. This chain is tRNA (32-2'-O)-methyltransferase regulator TRM732 (TRM732), found in Saccharomyces cerevisiae (strain ATCC 204508 / S288c) (Baker's yeast).